The primary structure comprises 253 residues: Sulfate transporter CysZ (253 aa).

Helical transmembrane passes span 31–51 (FVILPLLVNILLMGGAFWWLF), 75–95 (LLWPLAVISVLLVFGYFFSTI), 151–171 (IVLLILYFIPGIGQTVAPVLW), and 222–242 (IPLLNLFIMPVAVCGATAMWV).

This sequence belongs to the CysZ family.

Its subcellular location is the cell inner membrane. In terms of biological role, high affinity, high specificity proton-dependent sulfate transporter, which mediates sulfate uptake. Provides the sulfur source for the cysteine synthesis pathway. This Shigella dysenteriae serotype 1 (strain Sd197) protein is Sulfate transporter CysZ.